A 536-amino-acid chain; its full sequence is CTP synthase (536 aa).

An amidoligase domain region spans residues 1–267 (MTKYIFVTGG…DQIVCDHLKL (267 aa)). Residue Ser13 coordinates CTP. Position 13 (Ser13) interacts with UTP. 14-19 (SIGKGI) serves as a coordination point for ATP. Tyr54 serves as a coordination point for L-glutamine. Asp71 contributes to the ATP binding site. The Mg(2+) site is built by Asp71 and Glu141. CTP is bound by residues 148–150 (DIE), 188–193 (KTKPTQ), and Lys224. UTP contacts are provided by residues 188–193 (KTKPTQ) and Lys224. The 244-residue stretch at 292–535 (KIALVGKYVE…ITAAVENSQA (244 aa)) folds into the Glutamine amidotransferase type-1 domain. Gly354 contributes to the L-glutamine binding site. The active-site Nucleophile; for glutamine hydrolysis is the Cys381. Residues 382–385 (LGMQ), Glu405, and Arg463 contribute to the L-glutamine site. Residues His508 and Glu510 contribute to the active site.

The protein belongs to the CTP synthase family. Homotetramer.

The catalysed reaction is UTP + L-glutamine + ATP + H2O = CTP + L-glutamate + ADP + phosphate + 2 H(+). The enzyme catalyses L-glutamine + H2O = L-glutamate + NH4(+). It carries out the reaction UTP + NH4(+) + ATP = CTP + ADP + phosphate + 2 H(+). The protein operates within pyrimidine metabolism; CTP biosynthesis via de novo pathway; CTP from UDP: step 2/2. With respect to regulation, allosterically activated by GTP, when glutamine is the substrate; GTP has no effect on the reaction when ammonia is the substrate. The allosteric effector GTP functions by stabilizing the protein conformation that binds the tetrahedral intermediate(s) formed during glutamine hydrolysis. Inhibited by the product CTP, via allosteric rather than competitive inhibition. Its function is as follows. Catalyzes the ATP-dependent amination of UTP to CTP with either L-glutamine or ammonia as the source of nitrogen. Regulates intracellular CTP levels through interactions with the four ribonucleotide triphosphates. The protein is CTP synthase of Streptococcus mutans serotype c (strain ATCC 700610 / UA159).